The chain runs to 36 residues: Photosystem I reaction center subunit VIII (36 aa).

A helical membrane pass occupies residues 8-28 (SLFVPLVGLVFPAIAMASLFL).

This sequence belongs to the PsaI family.

The protein localises to the plastid. The protein resides in the chloroplast thylakoid membrane. May help in the organization of the PsaL subunit. The polypeptide is Photosystem I reaction center subunit VIII (Brassica oleracea (Wild cabbage)).